Reading from the N-terminus, the 427-residue chain is Serine--tRNA ligase (427 aa).

236 to 238 (TAE) is an L-serine binding site. 267-269 (RRE) serves as a coordination point for ATP. Glutamate 290 is an L-serine binding site. 354–357 (EISS) contributes to the ATP binding site. L-serine is bound at residue serine 390.

The protein belongs to the class-II aminoacyl-tRNA synthetase family. Type-1 seryl-tRNA synthetase subfamily. As to quaternary structure, homodimer. The tRNA molecule binds across the dimer.

It localises to the cytoplasm. The catalysed reaction is tRNA(Ser) + L-serine + ATP = L-seryl-tRNA(Ser) + AMP + diphosphate + H(+). It carries out the reaction tRNA(Sec) + L-serine + ATP = L-seryl-tRNA(Sec) + AMP + diphosphate + H(+). It functions in the pathway aminoacyl-tRNA biosynthesis; selenocysteinyl-tRNA(Sec) biosynthesis; L-seryl-tRNA(Sec) from L-serine and tRNA(Sec): step 1/1. In terms of biological role, catalyzes the attachment of serine to tRNA(Ser). Is also able to aminoacylate tRNA(Sec) with serine, to form the misacylated tRNA L-seryl-tRNA(Sec), which will be further converted into selenocysteinyl-tRNA(Sec). This Picosynechococcus sp. (strain ATCC 27264 / PCC 7002 / PR-6) (Agmenellum quadruplicatum) protein is Serine--tRNA ligase.